The chain runs to 245 residues: Orotidine 5'-phosphate decarboxylase (245 aa).

Residues Asp22, Lys44, 71-80, Thr131, Arg192, Gln201, Gly221, and Arg222 contribute to the substrate site; that span reads DLKFHDIPNT. Lys73 functions as the Proton donor in the catalytic mechanism.

Belongs to the OMP decarboxylase family. Type 1 subfamily. In terms of assembly, homodimer.

The enzyme catalyses orotidine 5'-phosphate + H(+) = UMP + CO2. It participates in pyrimidine metabolism; UMP biosynthesis via de novo pathway; UMP from orotate: step 2/2. Functionally, catalyzes the decarboxylation of orotidine 5'-monophosphate (OMP) to uridine 5'-monophosphate (UMP). In Escherichia coli (strain K12 / MC4100 / BW2952), this protein is Orotidine 5'-phosphate decarboxylase.